Here is a 184-residue protein sequence, read N- to C-terminus: Peptide deformylase (184 aa).

2 residues coordinate Fe cation: cysteine 92 and histidine 134. The active site involves glutamate 135. Residue histidine 138 participates in Fe cation binding.

It belongs to the polypeptide deformylase family. Requires Fe(2+) as cofactor.

The catalysed reaction is N-terminal N-formyl-L-methionyl-[peptide] + H2O = N-terminal L-methionyl-[peptide] + formate. In terms of biological role, removes the formyl group from the N-terminal Met of newly synthesized proteins. Requires at least a dipeptide for an efficient rate of reaction. N-terminal L-methionine is a prerequisite for activity but the enzyme has broad specificity at other positions. The chain is Peptide deformylase from Psychrobacter cryohalolentis (strain ATCC BAA-1226 / DSM 17306 / VKM B-2378 / K5).